The primary structure comprises 314 residues: CD-NTase-associated protein 12 (314 aa).

Residues 5–129 (RIFIGSSSEE…VKGISLARFK (125 aa)) enclose the TIR domain. Residues 160-314 (SSTLAAVYYE…DLIKIVDEDN (155 aa)) are STING domain. Residues F171, P234, and D252 each contribute to the 3',3'-c-di-GMP site.

In the C-terminal section; belongs to the bacterial STING family. As to quaternary structure, homodimer. Forms homodimers; in the presence of c-di-GMP forms filaments with an ordered array of parallel-stacked subunits.

It carries out the reaction NAD(+) + H2O = ADP-D-ribose + nicotinamide + H(+). Its activity is regulated as follows. NAD(+) hydrolase activity is strongly stimulated by c-di-GMP, weakly by 3'3'-cGAMP, very weakly by c-di-AMP but not at all by 2'3'-cGAMP. Self-association of TIR domains is required for NADase activity. Functionally, effector protein of a CBASS antiviral system with NAD(+) hydrolase activity. CBASS (cyclic oligonucleotide-based antiphage signaling system) provides immunity against bacteriophage. The CD-NTase protein synthesizes cyclic nucleotides in response to infection; these serve as specific second messenger signals. The signals activate a diverse range of effectors, leading to bacterial cell death and thus abortive phage infection. A type I-(GG) CBASS system. Its function is as follows. Binds c-di-GMP (synthesized by the cognate CdnE encoded upstream in the same operon), and about 10-fold less well 3'3'-cGAMP, but not c-di-AMP, 2'-3'-cGAMP or cUMP-AMP (tested without the N-terminal TIR domain). Upon activation by c-di-GMP forms filaments which hydrolyze NAD(+); filament formation is required for enzyme activation. The polypeptide is CD-NTase-associated protein 12 (Capnocytophaga granulosa (strain ATCC 51502 / DSM 11449 / JCM 8566 / LMG 16022 / NCTC 12948 / B0611)).